We begin with the raw amino-acid sequence, 587 residues long: MFS-type transporter opaD (587 aa).

A run of 9 helical transmembrane segments spans residues 87 to 107 (VAIM…NTIL), 124 to 146 (MGWY…GKLL), 153 to 173 (WVYI…GVSP), 184 to 204 (ISGT…TIIV), 214 to 234 (GILS…GGAF), 242 to 262 (WCFY…LLLF), 284 to 304 (IIGL…LQWG), 315 to 335 (IIAL…VEYW), and 357 to 377 (LFTF…PIWF). Residue asparagine 382 is glycosylated (N-linked (GlcNAc...) asparagine). A run of 5 helical transmembrane segments spans residues 393–413 (IPLI…VTTL), 414–434 (GYYI…AGLL), 447–467 (IGFQ…PLVV), 483–503 (LVTL…QSVF), and 554–574 (VYLV…PIRW).

Belongs to the major facilitator superfamily. TCR/Tet family.

Its subcellular location is the membrane. Its function is as follows. MFS-type transporter; part of the gene cluster that mediates the biosynthesis of oxepinamides, derivatives of anthranilyl-containing tripeptides that share an oxepin ring and a fused pyrimidinone moiety. The protein is MFS-type transporter opaD of Aspergillus ustus.